Reading from the N-terminus, the 258-residue chain is Imidazole glycerol phosphate synthase subunit HisF (258 aa).

Catalysis depends on residues Asp12 and Asp131.

It belongs to the HisA/HisF family. As to quaternary structure, heterodimer of HisH and HisF.

The protein resides in the cytoplasm. The catalysed reaction is 5-[(5-phospho-1-deoxy-D-ribulos-1-ylimino)methylamino]-1-(5-phospho-beta-D-ribosyl)imidazole-4-carboxamide + L-glutamine = D-erythro-1-(imidazol-4-yl)glycerol 3-phosphate + 5-amino-1-(5-phospho-beta-D-ribosyl)imidazole-4-carboxamide + L-glutamate + H(+). The protein operates within amino-acid biosynthesis; L-histidine biosynthesis; L-histidine from 5-phospho-alpha-D-ribose 1-diphosphate: step 5/9. In terms of biological role, IGPS catalyzes the conversion of PRFAR and glutamine to IGP, AICAR and glutamate. The HisF subunit catalyzes the cyclization activity that produces IGP and AICAR from PRFAR using the ammonia provided by the HisH subunit. This Corynebacterium glutamicum (strain R) protein is Imidazole glycerol phosphate synthase subunit HisF.